The primary structure comprises 124 residues: Large ribosomal subunit protein bL12 (124 aa).

The protein belongs to the bacterial ribosomal protein bL12 family. As to quaternary structure, homodimer. Part of the ribosomal stalk of the 50S ribosomal subunit. Forms a multimeric L10(L12)X complex, where L10 forms an elongated spine to which 2 to 4 L12 dimers bind in a sequential fashion. Binds GTP-bound translation factors.

Forms part of the ribosomal stalk which helps the ribosome interact with GTP-bound translation factors. Is thus essential for accurate translation. This Phocaeicola vulgatus (strain ATCC 8482 / DSM 1447 / JCM 5826 / CCUG 4940 / NBRC 14291 / NCTC 11154) (Bacteroides vulgatus) protein is Large ribosomal subunit protein bL12.